The sequence spans 894 residues: Protein translocase subunit SecA (894 aa).

ATP-binding positions include Gln-87, 105 to 109 (GEGKT), and Asp-512. The disordered stretch occupies residues 857 to 894 (FNLGDEPEAQQPVTSKKVGRNEPCPCGSGKKYKQCCGK). Cys-880, Cys-882, Cys-891, and Cys-892 together coordinate Zn(2+).

It belongs to the SecA family. As to quaternary structure, monomer and homodimer. Part of the essential Sec protein translocation apparatus which comprises SecA, SecYEG and auxiliary proteins SecDF-YajC and YidC. Requires Zn(2+) as cofactor.

Its subcellular location is the cell inner membrane. The protein resides in the cytoplasm. It carries out the reaction ATP + H2O + cellular proteinSide 1 = ADP + phosphate + cellular proteinSide 2.. In terms of biological role, part of the Sec protein translocase complex. Interacts with the SecYEG preprotein conducting channel. Has a central role in coupling the hydrolysis of ATP to the transfer of proteins into and across the cell membrane, serving as an ATP-driven molecular motor driving the stepwise translocation of polypeptide chains across the membrane. The chain is Protein translocase subunit SecA from Geotalea uraniireducens (strain Rf4) (Geobacter uraniireducens).